Here is a 169-residue protein sequence, read N- to C-terminus: Ribosome maturation factor RimM (169 aa).

One can recognise a PRC barrel domain in the interval 95-169; it reads EDGYYWTDLI…QITVDWELGY (75 aa).

Belongs to the RimM family. As to quaternary structure, binds ribosomal protein uS19.

It localises to the cytoplasm. In terms of biological role, an accessory protein needed during the final step in the assembly of 30S ribosomal subunit, possibly for assembly of the head region. Essential for efficient processing of 16S rRNA. May be needed both before and after RbfA during the maturation of 16S rRNA. It has affinity for free ribosomal 30S subunits but not for 70S ribosomes. The sequence is that of Ribosome maturation factor RimM from Nitrosomonas europaea (strain ATCC 19718 / CIP 103999 / KCTC 2705 / NBRC 14298).